The primary structure comprises 134 residues: Arsenate reductase 1 (134 aa).

Active-site nucleophile residues include Cys-11, Cys-83, and Cys-90. Intrachain disulfides connect Cys-11–Cys-83 and Cys-83–Cys-90.

Belongs to the low molecular weight phosphotyrosine protein phosphatase family. Thioredoxin-coupled ArsC subfamily.

It is found in the cytoplasm. The catalysed reaction is arsenate + [thioredoxin]-dithiol + H(+) = arsenite + [thioredoxin]-disulfide + H2O. Catalyzes the reduction of arsenate [As(V)] to arsenite [As(III)]. This Bacillus cereus (strain ATCC 10987 / NRS 248) protein is Arsenate reductase 1.